Reading from the N-terminus, the 523-residue chain is Katanin p60 ATPase-containing subunit A1 (523 aa).

Positions 82 to 215 (KEAPTGRRAA…DGKSKRGLYE (134 aa)) are disordered. Residues 178–194 (AGARSSTAGKKGAASKS) show a composition bias toward low complexity. Position 279 to 286 (279 to 286 (GPPGTGKT)) interacts with ATP.

Belongs to the AAA ATPase family. Katanin p60 subunit A1 subfamily. As to quaternary structure, may homooligomerize. Component of KTN80-KTN1 complexes composed of a hexamer of KTN1-KTN80 heterodimers that sense microtubule (MT) geometry to confer precise MT severing. Interacts directly with KTN80.1, KTN80.2, KTN80.3 and KTN80.4. Can interact with KTN80.1. May interact with the kinesin related protein KIN14A. Interacts with microtubule polymers. Binds to IPGA1. In terms of tissue distribution, expressed ubiquitously, including siliques, flowers, leaves, stems and roots.

The protein localises to the cytoplasm. Its subcellular location is the cytoskeleton. It carries out the reaction n ATP + n H2O + a microtubule = n ADP + n phosphate + (n+1) alpha/beta tubulin heterodimers.. In terms of biological role, severs microtubules in vitro in an ATP-dependent manner. Required for oligomerization of functional KTN80-KTN1 complexes that catalyze microtubule severing. This activity may promote rapid reorganization of cellular microtubule arrays. May be required for reorientation of cortical microtubule arrays during cellular elongation. Failure to correctly orient these arrays drastically compromises fiber length, cell wall thickness and mechanical strength. May also be required for the spatial organization of developmental cues within the root. Involved in the IPGA1- and AN-dependent regulation of pavement cells morphogenesis leading to puzzle shape. The chain is Katanin p60 ATPase-containing subunit A1 from Arabidopsis thaliana (Mouse-ear cress).